A 200-amino-acid chain; its full sequence is GTP-dependent dephospho-CoA kinase (200 aa).

GTP contacts are provided by Asp-56, Val-57, Val-58, Asp-75, and Glu-132.

It belongs to the GTP-dependent DPCK family.

It catalyses the reaction 3'-dephospho-CoA + GTP = GDP + CoA + H(+). The protein operates within cofactor biosynthesis; coenzyme A biosynthesis. In terms of biological role, catalyzes the GTP-dependent phosphorylation of the 3'-hydroxyl group of dephosphocoenzyme A to form coenzyme A (CoA). The protein is GTP-dependent dephospho-CoA kinase of Caldivirga maquilingensis (strain ATCC 700844 / DSM 13496 / JCM 10307 / IC-167).